Here is a 154-residue protein sequence, read N- to C-terminus: Putative ankyrin repeat protein RBE_1220 (154 aa).

ANK repeat units follow at residues 78-108 and 113-142; these read EKVN…NVDQ and NSRT…ILIL.

This chain is Putative ankyrin repeat protein RBE_1220, found in Rickettsia bellii (strain RML369-C).